The following is a 102-amino-acid chain: NADH-quinone oxidoreductase subunit K (102 aa).

3 helical membrane passes run 6-26 (MEHG…GLLI), 30-50 (LLYI…AFVV), and 65-85 (ILVI…LLLL).

This sequence belongs to the complex I subunit 4L family. NDH-1 is composed of 13 different subunits. Subunits NuoA, H, J, K, L, M, N constitute the membrane sector of the complex.

It localises to the cell inner membrane. It catalyses the reaction a quinone + NADH + 5 H(+)(in) = a quinol + NAD(+) + 4 H(+)(out). Its function is as follows. NDH-1 shuttles electrons from NADH, via FMN and iron-sulfur (Fe-S) centers, to quinones in the respiratory chain. The immediate electron acceptor for the enzyme in this species is believed to be ubiquinone. Couples the redox reaction to proton translocation (for every two electrons transferred, four hydrogen ions are translocated across the cytoplasmic membrane), and thus conserves the redox energy in a proton gradient. The protein is NADH-quinone oxidoreductase subunit K of Shewanella oneidensis (strain ATCC 700550 / JCM 31522 / CIP 106686 / LMG 19005 / NCIMB 14063 / MR-1).